We begin with the raw amino-acid sequence, 704 residues long: Polyribonucleotide nucleotidyltransferase (704 aa).

Residues aspartate 488 and aspartate 494 each coordinate Mg(2+). The region spanning 555 to 614 is the KH domain; that stretch reads PRITTIKINPEKIRDVIGKGGATIRALTEETGTTIELDDDGTVKIASSNGEATKEAIRRI. The S1 motif domain occupies 624 to 692; that stretch reads GTVYNGKVVR…RQGRVRLSMK (69 aa).

Belongs to the polyribonucleotide nucleotidyltransferase family. As to quaternary structure, component of the RNA degradosome, which is a multiprotein complex involved in RNA processing and mRNA degradation. The cofactor is Mg(2+).

It is found in the cytoplasm. It carries out the reaction RNA(n+1) + phosphate = RNA(n) + a ribonucleoside 5'-diphosphate. In terms of biological role, involved in mRNA degradation. Catalyzes the phosphorolysis of single-stranded polyribonucleotides processively in the 3'- to 5'-direction. This Shewanella halifaxensis (strain HAW-EB4) protein is Polyribonucleotide nucleotidyltransferase.